A 1854-amino-acid chain; its full sequence is Calcium-channel protein cch1 (1854 aa).

Low complexity predominate over residues 1-15 (MSSSSNSDPSSSPDN). The tract at residues 1–33 (MSSSSNSDPSSSPDNTDFIPLKDNPKDTSSYIN) is disordered. The N-linked (GlcNAc...) asparagine glycan is linked to asparagine 40. 3 consecutive transmembrane segments (helical) span residues 184 to 204 (HPLY…LLMI), 220 to 240 (IIVI…LFGF), and 274 to 294 (DFVA…QGIF). N-linked (GlcNAc...) asparagine glycosylation occurs at asparagine 310. A run of 8 helical transmembrane segments spans residues 328–348 (PLVQ…ILGV), 427–447 (FFNS…TDIM), 461–481 (LFII…IAVV), 514–534 (YLFY…VTLC), 549–569 (LIFY…RFFA), 581–601 (YTNL…LPSI), 606–626 (VAFG…ILLI), and 642–662 (QLLN…LCAV). Asparagine 699 is a glycosylation site (N-linked (GlcNAc...) asparagine). A helical membrane pass occupies residues 723–743 (FFTLWFLFSNNVVLSMFIAVI). An N-linked (GlcNAc...) asparagine glycan is attached at asparagine 786. Helical transmembrane passes span 946–966 (VFIY…TPIY), 980–1000 (FVWT…IKII), and 1021–1041 (FFVL…HALL). N-linked (GlcNAc...) asparagine glycosylation occurs at asparagine 1058. The next 2 membrane-spanning stretches (helical) occupy residues 1075 to 1095 (FFKI…FALW) and 1148 to 1168 (FPHA…VDIM). Residue asparagine 1184 is glycosylated (N-linked (GlcNAc...) asparagine). Transmembrane regions (helical) follow at residues 1193-1213 (FVLF…AIII), 1274-1294 (FTGL…PCPI), 1302-1322 (SIFL…VYGL), and 1331-1351 (FWNM…IAIL). A glycan (N-linked (GlcNAc...) asparagine) is linked at asparagine 1356. A run of 3 helical transmembrane segments spans residues 1358 to 1378 (SLTL…IPKF), 1393 to 1413 (PSIF…AIAF), and 1486 to 1506 (FIAW…TVVF). N-linked (GlcNAc...) asparagine glycans are attached at residues asparagine 1508 and asparagine 1773. The disordered stretch occupies residues 1764–1792 (TIASGEGDDNHSVEDHLKVPTDNEPRRSP). Over residues 1771-1790 (DDNHSVEDHLKVPTDNEPRR) the composition is skewed to basic and acidic residues.

It belongs to the calcium channel alpha-1 subunit (TC 1.A.1.11) family. Interacts with yam8 to form a Ca(2+) influx channel.

It is found in the cell membrane. Functionally, voltage-gated, high-affinity calcium channel that functions together with yam8 to mediate calcium entry into cells. Required during conditions of environmental stress. In Schizosaccharomyces pombe (strain 972 / ATCC 24843) (Fission yeast), this protein is Calcium-channel protein cch1 (cch1).